A 262-amino-acid chain; its full sequence is Type III pantothenate kinase (262 aa).

Residue 9–16 (DAGNSRIK) coordinates ATP. Substrate-binding positions include tyrosine 96 and 103 to 106 (GSDR). Aspartate 105 serves as the catalytic Proton acceptor. Threonine 129 contacts ATP. A substrate-binding site is contributed by threonine 189.

Belongs to the type III pantothenate kinase family. As to quaternary structure, homodimer. It depends on NH4(+) as a cofactor. Requires K(+) as cofactor.

It is found in the cytoplasm. The catalysed reaction is (R)-pantothenate + ATP = (R)-4'-phosphopantothenate + ADP + H(+). It participates in cofactor biosynthesis; coenzyme A biosynthesis; CoA from (R)-pantothenate: step 1/5. Catalyzes the phosphorylation of pantothenate (Pan), the first step in CoA biosynthesis. This is Type III pantothenate kinase from Burkholderia vietnamiensis (strain G4 / LMG 22486) (Burkholderia cepacia (strain R1808)).